A 177-amino-acid chain; its full sequence is Transmembrane protein 275 (177 aa).

The interval Met-1–Arg-20 is disordered. Helical transmembrane passes span Gly-36–Leu-56 and Leu-63–Cys-83. Positions Glu-113–Ser-177 are disordered. Residues Ser-128–Pro-161 are compositionally biased toward low complexity.

The protein localises to the membrane. In Mus musculus (Mouse), this protein is Transmembrane protein 275.